Here is a 69-residue protein sequence, read N- to C-terminus: Large ribosomal subunit protein uL29 (69 aa).

It belongs to the universal ribosomal protein uL29 family.

The polypeptide is Large ribosomal subunit protein uL29 (Synechococcus sp. (strain CC9902)).